Consider the following 308-residue polypeptide: Glutamyl-Q tRNA(Asp) synthetase (308 aa).

L-glutamate contacts are provided by residues 19-23 (RFAPS) and Glu55. The 'HIGH' region motif lies at 22–32 (PSPSGELHFGS). Cys111, Cys113, Tyr125, and Cys129 together coordinate Zn(2+). The L-glutamate site is built by Tyr182 and Arg200. Positions 238–242 (KLSKQ) match the 'KMSKS' region motif. Lys241 is a binding site for ATP.

This sequence belongs to the class-I aminoacyl-tRNA synthetase family. GluQ subfamily. The cofactor is Zn(2+).

Functionally, catalyzes the tRNA-independent activation of glutamate in presence of ATP and the subsequent transfer of glutamate onto a tRNA(Asp). Glutamate is transferred on the 2-amino-5-(4,5-dihydroxy-2-cyclopenten-1-yl) moiety of the queuosine in the wobble position of the QUC anticodon. This chain is Glutamyl-Q tRNA(Asp) synthetase, found in Escherichia coli O157:H7.